We begin with the raw amino-acid sequence, 1854 residues long: Immunoglobulin A1 protease (1854 aa).

The N-terminal stretch at 1–37 is a signal peptide; the sequence is MKKFLGEKQTRFAFRKLAVGLVSAAISSLFFVSIVGV. Residues 38–99 constitute a propeptide that is removed on maturation; the sequence is DSVQAQEKLN…NAGAKTLPNT (62 aa). Residues 96 to 100 carry the LPXTG sorting signal motif; the sequence is LPNTG. Thr-99 carries the post-translational modification Pentaglycyl murein peptidoglycan amidated threonine. 2 helical membrane passes run 106–125 and 132–154; these read TMMAAGLLLTTIGLVVFAVS and KFLLTVLVGASVGGGLILSVDAL. Residues 155 to 1854 are Extracellular-facing; it reads ENGSLLQYNA…FRKSIFENQK (1700 aa). The region spanning 256–335 is the G5 domain; sequence KPELLYKETS…PKIVEKGTKK (80 aa). Tandem repeats lie at residues 349–368, 369–388, 389–406, 407–426, 427–446, 447–466, 467–486, 487–506, 507–526, and 527–546. The interval 349–546 is 10 X 20 AA approximate tandem repeats; the sequence is VQPEQVAPLP…EYTGNIEPAA (198 aa). Over residues 533–550 the composition is skewed to low complexity; the sequence is EPPQEYTGNIEPAAPEAE. The interval 533 to 570 is disordered; the sequence is EPPQEYTGNIEPAAPEAENPTEKAQEPKEQKQEPEKNI. The segment covering 552–570 has biased composition (basic and acidic residues); the sequence is PTEKAQEPKEQKQEPEKNI. Residue His-1494 coordinates Zn(2+). The active site involves Glu-1495. Residues His-1498 and Glu-1518 each coordinate Zn(2+).

This sequence belongs to the peptidase M26 family. The cofactor is Zn(2+). In terms of processing, the Gram-positive cell-wall anchor motif LPXTG is located in the N-terminal part, in contrast to such motifs in other known streptococcal and staphylococcal proteins. The protease could be cleaved by the sortase and anchored in the membrane via the two potential N-terminal transmembrane domains, whereas the propeptide located prior to the LPXTG motif would remain attached to the cell wall peptidoglycan by an amide bond.

Its subcellular location is the secreted. The protein localises to the cell wall. It is found in the membrane. It catalyses the reaction Cleavage of Pro-|-Thr bond in the hinge region of the heavy chain of human IgA.. Its activity is regulated as follows. Inhibited by EDTA. Zinc metalloproteinase which cleaves human immunoglobulin A1 (IgA1) in the hinge region. The sequence is that of Immunoglobulin A1 protease (iga) from Streptococcus sanguinis.